The sequence spans 409 residues: Elongation factor Tu, chloroplastic (409 aa).

The region spanning 10–214 is the tr-type G domain; that stretch reads KPHVNIGTIG…AVDEYIPTPE (205 aa). Positions 19–26 are G1; sequence GHVDHGKT. 19–26 contributes to the GTP binding site; the sequence is GHVDHGKT. Mg(2+) is bound at residue threonine 26. Positions 60-64 are G2; it reads GITIN. Positions 81–84 are G3; sequence DCPG. GTP-binding positions include 81 to 85 and 136 to 139; these read DCPGH and NKED. Residues 136–139 are G4; the sequence is NKED. The interval 174–176 is G5; that stretch reads SAL.

Belongs to the TRAFAC class translation factor GTPase superfamily. Classic translation factor GTPase family. EF-Tu/EF-1A subfamily.

The protein localises to the plastid. It localises to the chloroplast. The catalysed reaction is GTP + H2O = GDP + phosphate + H(+). GTP hydrolase that promotes the GTP-dependent binding of aminoacyl-tRNA to the A-site of ribosomes during protein biosynthesis. This is Elongation factor Tu, chloroplastic (tufA) from Trieres chinensis (Marine centric diatom).